A 360-amino-acid polypeptide reads, in one-letter code: Membrane-bound lytic murein transglycosylase C (360 aa).

A signal peptide spans Met-1–Ser-16. Residue Cys-17 is the site of N-palmitoyl cysteine attachment. Cys-17 is lipidated: S-diacylglycerol cysteine.

This sequence belongs to the transglycosylase Slt family.

The protein resides in the cell outer membrane. It carries out the reaction Exolytic cleavage of the (1-&gt;4)-beta-glycosidic linkage between N-acetylmuramic acid (MurNAc) and N-acetylglucosamine (GlcNAc) residues in peptidoglycan, from either the reducing or the non-reducing ends of the peptidoglycan chains, with concomitant formation of a 1,6-anhydrobond in the MurNAc residue.. In terms of biological role, murein-degrading enzyme. May play a role in recycling of muropeptides during cell elongation and/or cell division. The sequence is that of Membrane-bound lytic murein transglycosylase C from Salmonella arizonae (strain ATCC BAA-731 / CDC346-86 / RSK2980).